The sequence spans 299 residues: Delta-9 desaturase-like 1 protein (299 aa).

Transmembrane regions (helical) follow at residues 31–51 (IDIA…LAPF) and 55–75 (WEAL…ITFS). The short motif at 77-82 (HRNLTH) is the Histidine box-1 element. The Histidine box-2 motif lies at 114–118 (HRFHH). The next 2 membrane-spanning stretches (helical) occupy residues 174–194 (IGLH…LPYL) and 198–218 (VGVG…ACHI). The short motif at 246–250 (HNNHH) is the Histidine box-3 element. A helical transmembrane segment spans residues 262–282 (WYQVDLTWYLICFFQALGLAT).

It belongs to the fatty acid desaturase type 1 family. Requires Fe cation as cofactor.

It is found in the endoplasmic reticulum membrane. The protein operates within lipid metabolism; polyunsaturated fatty acid biosynthesis. The chain is Delta-9 desaturase-like 1 protein from Arabidopsis thaliana (Mouse-ear cress).